The chain runs to 441 residues: ATP-dependent protease ATPase subunit HslU (441 aa).

ATP contacts are provided by residues Ile-18, Gly-60–Glu-65, Asp-254, Glu-319, and Arg-391.

This sequence belongs to the ClpX chaperone family. HslU subfamily. As to quaternary structure, a double ring-shaped homohexamer of HslV is capped on each side by a ring-shaped HslU homohexamer. The assembly of the HslU/HslV complex is dependent on binding of ATP.

The protein localises to the cytoplasm. Functionally, ATPase subunit of a proteasome-like degradation complex; this subunit has chaperone activity. The binding of ATP and its subsequent hydrolysis by HslU are essential for unfolding of protein substrates subsequently hydrolyzed by HslV. HslU recognizes the N-terminal part of its protein substrates and unfolds these before they are guided to HslV for hydrolysis. This chain is ATP-dependent protease ATPase subunit HslU, found in Shewanella woodyi (strain ATCC 51908 / MS32).